Consider the following 467-residue polypeptide: Venom serine carboxypeptidase (467 aa).

Positions 1–18 are cleaved as a signal peptide; that stretch reads MKKLVLLQFLFFISFARG. N-linked (GlcNAc...) asparagine glycosylation is found at asparagine 130 and asparagine 169. Serine 202 is an active-site residue. Asparagine 304, asparagine 322, and asparagine 344 each carry an N-linked (GlcNAc...) asparagine glycan. Catalysis depends on residues aspartate 387 and histidine 444.

This sequence belongs to the peptidase S10 family. In terms of tissue distribution, expressed by the venom duct.

It localises to the secreted. The enzyme catalyses Release of a C-terminal amino acid with broad specificity.. The protein is Venom serine carboxypeptidase of Apis mellifera (Honeybee).